An 85-amino-acid chain; its full sequence is Large ribosomal subunit protein bL27 (85 aa).

Positions 1–21 are disordered; it reads MAHKKAGGSTRNGRDSESKRL.

This sequence belongs to the bacterial ribosomal protein bL27 family.

The sequence is that of Large ribosomal subunit protein bL27 from Photorhabdus laumondii subsp. laumondii (strain DSM 15139 / CIP 105565 / TT01) (Photorhabdus luminescens subsp. laumondii).